Consider the following 88-residue polypeptide: Small ribosomal subunit protein bS20 (88 aa).

The segment at 69-88 (KNTASRKKSRLTKRFNKLTG) is disordered. Residues 71–88 (TASRKKSRLTKRFNKLTG) are compositionally biased toward basic residues.

It belongs to the bacterial ribosomal protein bS20 family.

In terms of biological role, binds directly to 16S ribosomal RNA. This Pelotomaculum thermopropionicum (strain DSM 13744 / JCM 10971 / SI) protein is Small ribosomal subunit protein bS20.